Here is a 149-residue protein sequence, read N- to C-terminus: Large ribosomal subunit protein uL22 (149 aa).

The protein belongs to the universal ribosomal protein uL22 family. As to quaternary structure, part of the 50S ribosomal subunit.

In terms of biological role, this protein binds specifically to 23S rRNA; its binding is stimulated by other ribosomal proteins, e.g. L4, L17, and L20. It is important during the early stages of 50S assembly. It makes multiple contacts with different domains of the 23S rRNA in the assembled 50S subunit and ribosome. Its function is as follows. The globular domain of the protein is located near the polypeptide exit tunnel on the outside of the subunit, while an extended beta-hairpin is found that lines the wall of the exit tunnel in the center of the 70S ribosome. The polypeptide is Large ribosomal subunit protein uL22 (Petrotoga mobilis (strain DSM 10674 / SJ95)).